The primary structure comprises 218 residues: Pyrrolidone-carboxylate peptidase 2 (218 aa).

Residues Glu83, Cys146, and His170 contribute to the active site.

Belongs to the peptidase C15 family. Homotetramer.

The protein localises to the cytoplasm. The enzyme catalyses Release of an N-terminal pyroglutamyl group from a polypeptide, the second amino acid generally not being Pro.. Its function is as follows. Removes 5-oxoproline from various penultimate amino acid residues except L-proline. In Photorhabdus laumondii subsp. laumondii (strain DSM 15139 / CIP 105565 / TT01) (Photorhabdus luminescens subsp. laumondii), this protein is Pyrrolidone-carboxylate peptidase 2.